The sequence spans 290 residues: Elongation factor Ts (290 aa).

The involved in Mg(2+) ion dislocation from EF-Tu stretch occupies residues 87–90; it reads TDFV.

This sequence belongs to the EF-Ts family.

Its subcellular location is the cytoplasm. Its function is as follows. Associates with the EF-Tu.GDP complex and induces the exchange of GDP to GTP. It remains bound to the aminoacyl-tRNA.EF-Tu.GTP complex up to the GTP hydrolysis stage on the ribosome. This chain is Elongation factor Ts (tsf), found in Treponema pallidum (strain Nichols).